Consider the following 105-residue polypeptide: MADWNGEYISPYAEHGKKSEQVKKITVSIPLKVLKVLTDERTRRQINNLRHATNSELLCEAFLHAYTGQPLPTDEDLRKDRPDDIPTEAKELMTAMGIEFEAYDD.

It belongs to the MetJ family. In terms of assembly, homodimer.

The protein resides in the cytoplasm. Functionally, this regulatory protein, when combined with SAM (S-adenosylmethionine) represses the expression of the methionine regulon and of enzymes involved in SAM synthesis. The sequence is that of Met repressor from Vibrio vulnificus (strain CMCP6).